Reading from the N-terminus, the 162-residue chain is Necrosis-inducing secreted protein 1 (162 aa).

A signal peptide spans 1–19 (MQFLTSLAAAASLVSLASA). N-linked (GlcNAc...) asparagine glycans are attached at residues Asn-88, Asn-126, Asn-133, and Asn-150. Positions 103–132 (EYVIAASLFSLYGASSSPTVSNYNVTVNVG) are BAK1/SERK3-binding.

This sequence belongs to the NIS1 effector family. In terms of assembly, interacts with the host pattern recognition receptor (PRR)-associated kinases BAK1/SERK3, BKK1/SERK4 and BIK1.

It localises to the secreted. The protein resides in the host cytoplasm. Its function is as follows. Secreted effector that induces necrotic lesions in Nicotiana benthamiana. Interacts with the host receptor-like kinases (RLKs) BAK1/SERK3 and BKK1/SERK4, inhibits their kinase activity and suppresses INF1-induced pathogen-associated molecular pattern (PAMP)-triggered immunity (PTI) in N.benthamiana. Also interacts with the host receptor-like cytoplasmic kinase (RLCK) BIK1 and inhibits its kinase activity, thereby inhibiting PAMP-induced ROS generation. In PTI, phosphorylation relaying by RLKs and RLCKs is critical for the initiation of downstream signaling. The sequence is that of Necrosis-inducing secreted protein 1 from Colletotrichum orbiculare (strain 104-T / ATCC 96160 / CBS 514.97 / LARS 414 / MAFF 240422) (Cucumber anthracnose fungus).